The following is a 193-amino-acid chain: Histone H5 (193 aa).

The span at 1 to 11 (TDSPIPAPAPA) shows a compositional bias: pro residues. 2 disordered regions span residues 1–29 (TDSPIPAPAPAAKPKRARAPRKPASHPTY) and 80–193 (GVLK…PKKK). Positions 13 to 24 (KPKRARAPRKPA) are enriched in basic residues. In terms of domain architecture, H15 spans 25–98 (SHPTYSEMIA…GASGSFRLAK (74 aa)). The segment covering 104–193 (RSPAGRKKKK…SGARKSPKKK (90 aa)) has biased composition (basic residues).

This sequence belongs to the histone H1/H5 family. In terms of tissue distribution, erythroid cells.

It localises to the nucleus. It is found in the chromosome. In terms of biological role, histone H5 performs the same function as H1, being necessary for the condensation of nucleosome chains into higher order structures, and replaces histone H1 in certain cells. This is Histone H5 from Anser anser anser (Western greylag goose).